A 139-amino-acid polypeptide reads, in one-letter code: Hydrogenase maturation factor HypA (139 aa).

Histidine 2 is a Ni(2+) binding site. Zn(2+) contacts are provided by cysteine 73, cysteine 76, cysteine 110, and cysteine 113.

It belongs to the HypA/HybF family.

Its function is as follows. Involved in the maturation of [NiFe] hydrogenases. Required for nickel insertion into the metal center of the hydrogenase. In Pyrococcus horikoshii (strain ATCC 700860 / DSM 12428 / JCM 9974 / NBRC 100139 / OT-3), this protein is Hydrogenase maturation factor HypA.